The chain runs to 209 residues: Imidazoleglycerol-phosphate dehydratase (209 aa).

The protein belongs to the imidazoleglycerol-phosphate dehydratase family.

It localises to the cytoplasm. The catalysed reaction is D-erythro-1-(imidazol-4-yl)glycerol 3-phosphate = 3-(imidazol-4-yl)-2-oxopropyl phosphate + H2O. It participates in amino-acid biosynthesis; L-histidine biosynthesis; L-histidine from 5-phospho-alpha-D-ribose 1-diphosphate: step 6/9. This is Imidazoleglycerol-phosphate dehydratase from Paracidovorax citrulli (strain AAC00-1) (Acidovorax citrulli).